A 112-amino-acid polypeptide reads, in one-letter code: UPF0212 protein Mboo_1659 (112 aa).

Belongs to the UPF0212 family.

This is UPF0212 protein Mboo_1659 from Methanoregula boonei (strain DSM 21154 / JCM 14090 / 6A8).